We begin with the raw amino-acid sequence, 181 residues long: MICGIDEVGRGCIFGPVLSAAVIFKGNPNFLNELDDSKKLKKAKREYLSSLILENSYYAFAEVSNETIDKINIHHASLLAMQIAYEKLDINCDLVLVDGKFIPKIKAKKIQAIIKGDSIINEIKAASIIAKVQRDKLMDEYNKIYPLYALNKNKGYPTKEHKEAIKKHGISNLHRRSFKFI.

An RNase H type-2 domain is found at 1 to 181; it reads MICGIDEVGR…NLHRRSFKFI (181 aa). Aspartate 6, glutamate 7, and aspartate 98 together coordinate a divalent metal cation.

This sequence belongs to the RNase HII family. Requires Mn(2+) as cofactor. Mg(2+) is required as a cofactor.

Its subcellular location is the cytoplasm. The enzyme catalyses Endonucleolytic cleavage to 5'-phosphomonoester.. In terms of biological role, endonuclease that specifically degrades the RNA of RNA-DNA hybrids. The sequence is that of Ribonuclease HII from Borrelia hermsii (strain HS1 / DAH).